The primary structure comprises 67 residues: Beta-defensin 110 (67 aa).

The first 19 residues, 1-19, serve as a signal peptide directing secretion; the sequence is MKIQLFFFILLFWVTILPA. Cystine bridges form between C35–C63, C42–C56, and C46–C64.

It belongs to the beta-defensin family.

It is found in the secreted. In terms of biological role, has antibacterial activity. The chain is Beta-defensin 110 (DEFB110) from Pan troglodytes (Chimpanzee).